The sequence spans 344 residues: Putative transport protein sll0060 (344 aa).

The next 8 helical transmembrane spans lie at 14–34 (LWIG…LQIL), 41–61 (LRIF…VRWL), 72–92 (AVAL…LLVI), 155–175 (LINL…IFIM), 215–235 (IGQA…LSIF), 237–257 (VPLA…PFGG), 262–282 (VLIS…VLAI), and 310–330 (ILLS…LVAI).

The protein belongs to the autoinducer-2 exporter (AI-2E) (TC 2.A.86) family.

It is found in the cell membrane. In Synechocystis sp. (strain ATCC 27184 / PCC 6803 / Kazusa), this protein is Putative transport protein sll0060.